The chain runs to 373 residues: Putative ribosome biogenesis protein C8F11.04 (373 aa).

Positions 265 to 373 (RKVVTKETAS…VKAGKNKVKH (109 aa)) are disordered. The span at 292-320 (KVEVAKESKDSKQQNVSDKKQVTVKEVPK) shows a compositional bias: basic and acidic residues. Over residues 347 to 359 (KVSQSSLKANGTT) the composition is skewed to polar residues. The segment covering 362 to 373 (KKVKAGKNKVKH) has biased composition (basic residues).

The protein belongs to the universal ribosomal protein uL1 family. Highly divergent. Component of the 90S pre-ribosomes.

It localises to the nucleus. The protein localises to the nucleolus. In terms of biological role, involved in rRNA-processing and ribosome biosynthesis. In Schizosaccharomyces pombe (strain 972 / ATCC 24843) (Fission yeast), this protein is Putative ribosome biogenesis protein C8F11.04.